Reading from the N-terminus, the 105-residue chain is MNNEFLQTEEDIVRMLRTVYDPEIPVNVYDLGLIYNVDVGADGFVTVTMTLTAPNCPAADFIIEDVRMKVESVKGVKGVKIDLTFEPEWNKDMMSEEAMLELGFL.

This sequence belongs to the Fe-S cluster assembly domain superfamily. MIP18-like family. As to quaternary structure, putative homodimer; may be disulfide-linked.

Functionally, iron binding protein that protects DNA from Fenton chemistry-mediated damage caused by hydrogen peroxide induced oxidative stress. May be involved in iron-sulfur cluster assembly. This is Fe-S protein maturation auxiliary factor PG_1777 from Porphyromonas gingivalis (strain ATCC BAA-308 / W83).